We begin with the raw amino-acid sequence, 273 residues long: NADH-ubiquinone oxidoreductase 29.9 kDa subunit, mitochondrial (273 aa).

The N-terminal 8 residues, 1–8, are a transit peptide targeting the mitochondrion; the sequence is MRAALRLL.

This sequence belongs to the complex I NDUFA5 subunit family. As to quaternary structure, complex I is composed of about 40 different subunits.

Its subcellular location is the mitochondrion inner membrane. Functionally, accessory subunit of the mitochondrial membrane respiratory chain NADH dehydrogenase (Complex I), that is believed not to be involved in catalysis. Complex I functions in the transfer of electrons from NADH to the respiratory chain. The immediate electron acceptor for the enzyme is believed to be ubiquinone. In Neurospora crassa (strain ATCC 24698 / 74-OR23-1A / CBS 708.71 / DSM 1257 / FGSC 987), this protein is NADH-ubiquinone oxidoreductase 29.9 kDa subunit, mitochondrial (nuo-32).